The chain runs to 421 residues: 4-hydroxy-3-methylbut-2-en-1-yl diphosphate synthase (flavodoxin) (421 aa).

Residues cysteine 311, cysteine 314, cysteine 357, and glutamate 364 each contribute to the [4Fe-4S] cluster site.

This sequence belongs to the IspG family. Requires [4Fe-4S] cluster as cofactor.

The enzyme catalyses (2E)-4-hydroxy-3-methylbut-2-enyl diphosphate + oxidized [flavodoxin] + H2O + 2 H(+) = 2-C-methyl-D-erythritol 2,4-cyclic diphosphate + reduced [flavodoxin]. Its pathway is isoprenoid biosynthesis; isopentenyl diphosphate biosynthesis via DXP pathway; isopentenyl diphosphate from 1-deoxy-D-xylulose 5-phosphate: step 5/6. In terms of biological role, converts 2C-methyl-D-erythritol 2,4-cyclodiphosphate (ME-2,4cPP) into 1-hydroxy-2-methyl-2-(E)-butenyl 4-diphosphate. The protein is 4-hydroxy-3-methylbut-2-en-1-yl diphosphate synthase (flavodoxin) of Xanthomonas oryzae pv. oryzae (strain MAFF 311018).